Consider the following 184-residue polypeptide: Deoxyuridine 5'-triphosphate nucleotidohydrolase (184 aa).

A compositionally biased stretch (polar residues) spans methionine 1 to phenylalanine 16. The interval methionine 1 to proline 25 is disordered. Substrate-binding positions include arginine 96–glycine 98, asparagine 109, threonine 113–aspartate 115, and lysine 123. Residues serine 165–aspartate 184 form a disordered region. Positions arginine 173 to aspartate 184 are enriched in gly residues.

The protein belongs to the dUTPase family. The cofactor is Mg(2+).

The catalysed reaction is dUTP + H2O = dUMP + diphosphate + H(+). The protein operates within pyrimidine metabolism; dUMP biosynthesis; dUMP from dCTP (dUTP route): step 2/2. This enzyme is involved in nucleotide metabolism: it produces dUMP, the immediate precursor of thymidine nucleotides and it decreases the intracellular concentration of dUTP so that uracil cannot be incorporated into DNA. The polypeptide is Deoxyuridine 5'-triphosphate nucleotidohydrolase (Bartonella henselae (strain ATCC 49882 / DSM 28221 / CCUG 30454 / Houston 1) (Rochalimaea henselae)).